The primary structure comprises 353 residues: Anthranilate phosphoribosyltransferase (353 aa).

5-phospho-alpha-D-ribose 1-diphosphate contacts are provided by residues glycine 87, 90–91, threonine 95, 97–100, 115–123, and threonine 127; these read GD, NIST, and KHGNRAASS. Glycine 87 contacts anthranilate. Serine 99 provides a ligand contact to Mg(2+). Position 118 (asparagine 118) interacts with anthranilate. Arginine 173 contributes to the anthranilate binding site. Mg(2+) contacts are provided by aspartate 231 and glutamate 232.

It belongs to the anthranilate phosphoribosyltransferase family. Homodimer. The cofactor is Mg(2+).

It catalyses the reaction N-(5-phospho-beta-D-ribosyl)anthranilate + diphosphate = 5-phospho-alpha-D-ribose 1-diphosphate + anthranilate. It functions in the pathway amino-acid biosynthesis; L-tryptophan biosynthesis; L-tryptophan from chorismate: step 2/5. In terms of biological role, catalyzes the transfer of the phosphoribosyl group of 5-phosphorylribose-1-pyrophosphate (PRPP) to anthranilate to yield N-(5'-phosphoribosyl)-anthranilate (PRA). The chain is Anthranilate phosphoribosyltransferase from Salinispora arenicola (strain CNS-205).